Here is a 364-residue protein sequence, read N- to C-terminus: Valine dehydrogenase (364 aa).

Lysine 91 is an active-site residue. 191–197 serves as a coordination point for NAD(+); that stretch reads GVGKVGH.

The protein belongs to the Glu/Leu/Phe/Val dehydrogenases family. As to quaternary structure, homodimer.

The protein localises to the cytoplasm. The enzyme catalyses L-valine + NAD(+) + H2O = 3-methyl-2-oxobutanoate + NH4(+) + NADH + H(+). It participates in amino-acid degradation; L-valine degradation. Repressed in minimal medium by the presence of glucose and NH4(+), glycerol and NH4(+), or glycerol and asparagine. Its function is as follows. Oxidative deamination of branched-chain amino acids. Oxidizes L-valine and L-alpha-aminobutyric acid efficiently, and L-isoleucine and L-leucine less efficiently. Does not act on D-valine. The catabolism of L-valine is the major source of fatty acid precursors for macrolide biosynthesis and a vital source of antibiotic precursors. Uses NAD; no activity was found with NADP. This Streptomyces coelicolor (strain ATCC BAA-471 / A3(2) / M145) protein is Valine dehydrogenase (vdh).